The following is a 242-amino-acid chain: Universal stress protein PHOS32 (242 aa).

A chloroplast-targeting transit peptide spans 1–43 (MNPADSDHPQLPNIKIHHPPSPRHSHHHHSSSTPSSAATPTPT). The segment at 1–45 (MNPADSDHPQLPNIKIHHPPSPRHSHHHHSSSTPSSAATPTPTAG) is disordered. Residues 15–30 (KIHHPPSPRHSHHHHS) are compositionally biased toward basic residues. Residue proline 19 coordinates ATP. The residue at position 21 (serine 21) is a Phosphoserine; by MAPK3 and MAPK6. Low complexity predominate over residues 31–44 (SSTPSSAATPTPTA). ATP is bound by residues valine 83, 168-178 (GSRGFGAEKKR), and 186-188 (SVS). Serine 219 carries the post-translational modification Phosphoserine.

Belongs to the universal stress protein A family. Post-translationally, phosphorylated by MAPK3 and MAPK6 after pathogenic elicitation (e.g. bacterial flg22, Phytophthora infestans zoospores and xylanase).

The protein localises to the plastid. Its subcellular location is the chloroplast. The chain is Universal stress protein PHOS32 from Arabidopsis thaliana (Mouse-ear cress).